The chain runs to 287 residues: ATP synthase gamma chain (287 aa).

It belongs to the ATPase gamma chain family. F-type ATPases have 2 components, CF(1) - the catalytic core - and CF(0) - the membrane proton channel. CF(1) has five subunits: alpha(3), beta(3), gamma(1), delta(1), epsilon(1). CF(0) has three main subunits: a, b and c.

It is found in the cell inner membrane. Functionally, produces ATP from ADP in the presence of a proton gradient across the membrane. The gamma chain is believed to be important in regulating ATPase activity and the flow of protons through the CF(0) complex. The protein is ATP synthase gamma chain of Xanthomonas campestris pv. campestris (strain B100).